Reading from the N-terminus, the 234-residue chain is Large ribosomal subunit protein uL1 (234 aa).

This sequence belongs to the universal ribosomal protein uL1 family. As to quaternary structure, part of the 50S ribosomal subunit.

In terms of biological role, binds directly to 23S rRNA. The L1 stalk is quite mobile in the ribosome, and is involved in E site tRNA release. Functionally, protein L1 is also a translational repressor protein, it controls the translation of the L11 operon by binding to its mRNA. The chain is Large ribosomal subunit protein uL1 from Bdellovibrio bacteriovorus (strain ATCC 15356 / DSM 50701 / NCIMB 9529 / HD100).